The sequence spans 164 residues: R-phycoerythrin alpha chain (164 aa).

(2R,3E)-phycoerythrobilin contacts are provided by Cys-82 and Cys-139.

The protein belongs to the phycobiliprotein family. As to quaternary structure, heterodimer of an alpha and a beta chain. Post-translationally, contains two covalently linked bilin chromophores.

The protein resides in the plastid. Its subcellular location is the chloroplast thylakoid membrane. Functionally, light-harvesting photosynthetic bile pigment-protein from the phycobiliprotein complex. The chain is R-phycoerythrin alpha chain (cpeA) from Pyropia tenera (Nori).